Here is a 343-residue protein sequence, read N- to C-terminus: 4-hydroxy-2-oxovalerate aldolase 1 (343 aa).

The region spanning 8 to 260 is the Pyruvate carboxyltransferase domain; the sequence is ITVHDMSLRD…ETGVDVFAIS (253 aa). Residue 16-17 coordinates substrate; it reads RD. Aspartate 17 serves as a coordination point for Mn(2+). Residue histidine 20 is the Proton acceptor of the active site. Substrate-binding residues include serine 170 and histidine 199. Mn(2+) contacts are provided by histidine 199 and histidine 201. Tyrosine 290 is a binding site for substrate.

The protein belongs to the 4-hydroxy-2-oxovalerate aldolase family.

The enzyme catalyses (S)-4-hydroxy-2-oxopentanoate = acetaldehyde + pyruvate. This Burkholderia cenocepacia (strain ATCC BAA-245 / DSM 16553 / LMG 16656 / NCTC 13227 / J2315 / CF5610) (Burkholderia cepacia (strain J2315)) protein is 4-hydroxy-2-oxovalerate aldolase 1 (bphI).